A 235-amino-acid chain; its full sequence is Proteasome subunit alpha type-2-B (235 aa).

Lys64 is covalently cross-linked (Glycyl lysine isopeptide (Lys-Gly) (interchain with G-Cter in ubiquitin)).

This sequence belongs to the peptidase T1A family. In terms of assembly, component of the 20S core complex of the 26S proteasome. The 26S proteasome is composed of a core protease (CP), known as the 20S proteasome, capped at one or both ends by the 19S regulatory particle (RP/PA700). The 20S proteasome core is composed of 28 subunits that are arranged in four stacked rings, resulting in a barrel-shaped structure. The two end rings are each formed by seven alpha subunits, and the two central rings are each formed by seven beta subunits. The catalytic chamber with the active sites is on the inside of the barrel.

The protein localises to the cytoplasm. The protein resides in the nucleus. In terms of biological role, the proteasome is a multicatalytic proteinase complex which is characterized by its ability to cleave peptides with Arg, Phe, Tyr, Leu, and Glu adjacent to the leaving group at neutral or slightly basic pH. The proteasome has an ATP-dependent proteolytic activity. The protein is Proteasome subunit alpha type-2-B (PAB2) of Arabidopsis thaliana (Mouse-ear cress).